Here is a 433-residue protein sequence, read N- to C-terminus: PC-esterase domain-containing protein 1B (433 aa).

Residues 386-433 (PPCHQRQAPVVHRGFPRHFARGPYSNPWRDRPRRPPKHSPAGLESRPQ) form a disordered region.

It belongs to the PC-esterase family.

The polypeptide is PC-esterase domain-containing protein 1B (Pced1b) (Mus musculus (Mouse)).